A 305-amino-acid chain; its full sequence is Homoserine kinase (305 aa).

Residue 93-103 coordinates ATP; the sequence is PLSRGLGSSAT.

Belongs to the GHMP kinase family. Homoserine kinase subfamily.

Its subcellular location is the cytoplasm. The enzyme catalyses L-homoserine + ATP = O-phospho-L-homoserine + ADP + H(+). It functions in the pathway amino-acid biosynthesis; L-threonine biosynthesis; L-threonine from L-aspartate: step 4/5. Its function is as follows. Catalyzes the ATP-dependent phosphorylation of L-homoserine to L-homoserine phosphate. The polypeptide is Homoserine kinase (Picosynechococcus sp. (strain ATCC 27264 / PCC 7002 / PR-6) (Agmenellum quadruplicatum)).